Reading from the N-terminus, the 475-residue chain is Ankyrin repeat, SAM and basic leucine zipper domain-containing protein 1 (475 aa).

The tract at residues 1–24 (MAAGTVRGLAVAGGGESSESEDDG) is disordered. Residues S17, S18, and S20 each carry the phosphoserine modification. ANK repeat units follow at residues 45–74 (EKNE…SVDS), 78–107 (YGWT…NASF), 110–144 (DKQT…DPNV), 148–177 (RLMT…EVNA), 181–210 (NGYT…NKML), and 214–243 (DGKT…PLEG). In terms of domain architecture, SAM spans 272-334 (SYTAFGDLEI…KILAALKELE (63 aa)).

Interacts with DDX4, PIWIL1, RANBP9 and TDRD1.

The protein resides in the cytoplasm. In terms of biological role, plays a central role during spermatogenesis by repressing transposable elements and preventing their mobilization, which is essential for the germline integrity. Acts via the piRNA metabolic process, which mediates the repression of transposable elements during meiosis by forming complexes composed of piRNAs and Piwi proteins and governs the methylation and subsequent repression of transposons. Its association with pi-bodies suggests a participation in the primary piRNAs metabolic process. Required prior to the pachytene stage to facilitate the production of multiple types of piRNAs, including those associated with repeats involved in the regulation of retrotransposons. May act by mediating protein-protein interactions during germ cell maturation. This chain is Ankyrin repeat, SAM and basic leucine zipper domain-containing protein 1 (ASZ1), found in Neofelis nebulosa (Clouded leopard).